The sequence spans 406 residues: Tryptophan synthase beta chain (406 aa).

An N6-(pyridoxal phosphate)lysine modification is found at Lys99.

It belongs to the TrpB family. Tetramer of two alpha and two beta chains. Requires pyridoxal 5'-phosphate as cofactor.

It carries out the reaction (1S,2R)-1-C-(indol-3-yl)glycerol 3-phosphate + L-serine = D-glyceraldehyde 3-phosphate + L-tryptophan + H2O. It functions in the pathway amino-acid biosynthesis; L-tryptophan biosynthesis; L-tryptophan from chorismate: step 5/5. The beta subunit is responsible for the synthesis of L-tryptophan from indole and L-serine. The chain is Tryptophan synthase beta chain from Methylobacterium nodulans (strain LMG 21967 / CNCM I-2342 / ORS 2060).